The following is a 79-amino-acid chain: Pigment-dispersing hormone type 1 (79 aa).

The signal sequence occupies residues 1–22 (MRSAVVVALLVMVAMSLQLTAA). Alanine 76 bears the Alanine amide mark.

This sequence belongs to the arthropod PDH family. Eyestalk.

The protein resides in the secreted. The pigment-dispersing hormone causes the migration of the distal retinal pigment into the proximal end of the pigment chromatophore cells and thus decreases the amount of light entering the retinulas. May also function as a neurotransmitter and/or neuromodulator. The sequence is that of Pigment-dispersing hormone type 1 (PDH1) from Penaeus vannamei (Whiteleg shrimp).